The following is a 387-amino-acid chain: 8-amino-7-oxononanoate synthase (387 aa).

R20 is a substrate binding site. 107 to 108 (GY) serves as a coordination point for pyridoxal 5'-phosphate. Position 132 (H132) interacts with substrate. Pyridoxal 5'-phosphate-binding residues include S181, H209, and T238. The residue at position 241 (K241) is an N6-(pyridoxal phosphate)lysine. A substrate-binding site is contributed by T355.

It belongs to the class-II pyridoxal-phosphate-dependent aminotransferase family. BioF subfamily. In terms of assembly, homodimer. Pyridoxal 5'-phosphate serves as cofactor.

The catalysed reaction is 6-carboxyhexanoyl-[ACP] + L-alanine + H(+) = (8S)-8-amino-7-oxononanoate + holo-[ACP] + CO2. The protein operates within cofactor biosynthesis; biotin biosynthesis. Its function is as follows. Catalyzes the decarboxylative condensation of pimeloyl-[acyl-carrier protein] and L-alanine to produce 8-amino-7-oxononanoate (AON), [acyl-carrier protein], and carbon dioxide. This Dechloromonas aromatica (strain RCB) protein is 8-amino-7-oxononanoate synthase.